Consider the following 201-residue polypeptide: 3-isopropylmalate dehydratase small subunit (201 aa).

It belongs to the LeuD family. LeuD type 1 subfamily. In terms of assembly, heterodimer of LeuC and LeuD.

The catalysed reaction is (2R,3S)-3-isopropylmalate = (2S)-2-isopropylmalate. The protein operates within amino-acid biosynthesis; L-leucine biosynthesis; L-leucine from 3-methyl-2-oxobutanoate: step 2/4. Functionally, catalyzes the isomerization between 2-isopropylmalate and 3-isopropylmalate, via the formation of 2-isopropylmaleate. The protein is 3-isopropylmalate dehydratase small subunit of Rhodopseudomonas palustris (strain BisA53).